The sequence spans 294 residues: MSNKGTERVKRGMAEMQKGGVIMDVVNAEQAKIAEEAGAVAVMALERVPADIRAAGGVARMADPRIVEEVQNAVTIPVMAKARIGHIVEARVLEALGVDYIDESEVLTPADEEFHLNKNEYTVPFVCGCRDLGEATRRIAEGASMLRTKGEPGTGNIVEAVRHMRKVNAQIRKVAAMSEDELMTEAKNLGAPYELLLQIKKDGKLPVVNFAAGGVATPADAALMMQLGADGVFVGSGIFKSDNPAKFAKAIVEATTHFTDYGLIAELSKELGTAMKGIEISNLLPEERMQERGW.

Aspartate 24 contacts D-ribose 5-phosphate. Lysine 81 (schiff-base intermediate with D-ribose 5-phosphate) is an active-site residue. Glycine 153 is a binding site for D-ribose 5-phosphate. Arginine 165 lines the D-glyceraldehyde 3-phosphate pocket. D-ribose 5-phosphate is bound by residues glycine 214 and 235 to 236; that span reads GS.

Belongs to the PdxS/SNZ family. In terms of assembly, in the presence of PdxT, forms a dodecamer of heterodimers.

It carries out the reaction aldehydo-D-ribose 5-phosphate + D-glyceraldehyde 3-phosphate + L-glutamine = pyridoxal 5'-phosphate + L-glutamate + phosphate + 3 H2O + H(+). It functions in the pathway cofactor biosynthesis; pyridoxal 5'-phosphate biosynthesis. Its function is as follows. Catalyzes the formation of pyridoxal 5'-phosphate from ribose 5-phosphate (RBP), glyceraldehyde 3-phosphate (G3P) and ammonia. The ammonia is provided by the PdxT subunit. Can also use ribulose 5-phosphate and dihydroxyacetone phosphate as substrates, resulting from enzyme-catalyzed isomerization of RBP and G3P, respectively. This is Pyridoxal 5'-phosphate synthase subunit PdxS from Bacillus pumilus (strain SAFR-032).